We begin with the raw amino-acid sequence, 735 residues long: Ribosomal RNA large subunit methyltransferase K/L (735 aa).

In terms of domain architecture, THUMP spans 45 to 156 (DGYRACLWSR…RDSLSFSLDL (112 aa)).

The protein belongs to the methyltransferase superfamily. RlmKL family.

The protein localises to the cytoplasm. It carries out the reaction guanosine(2445) in 23S rRNA + S-adenosyl-L-methionine = N(2)-methylguanosine(2445) in 23S rRNA + S-adenosyl-L-homocysteine + H(+). The catalysed reaction is guanosine(2069) in 23S rRNA + S-adenosyl-L-methionine = N(2)-methylguanosine(2069) in 23S rRNA + S-adenosyl-L-homocysteine + H(+). Functionally, specifically methylates the guanine in position 2445 (m2G2445) and the guanine in position 2069 (m7G2069) of 23S rRNA. This is Ribosomal RNA large subunit methyltransferase K/L from Allochromatium vinosum (strain ATCC 17899 / DSM 180 / NBRC 103801 / NCIMB 10441 / D) (Chromatium vinosum).